The sequence spans 35 residues: Conotoxin Cal6.1c (35 aa).

Residues 1–35 (GLNRPSKRCLAGSAPCEFHKRSTCCSGHCIIWWCA) constitute a propeptide that is removed on maturation. 3 disulfides stabilise this stretch: cysteine 9–cysteine 25, cysteine 16–cysteine 29, and cysteine 24–cysteine 34.

The protein belongs to the conotoxin O1 superfamily. In terms of tissue distribution, expressed by the venom duct.

The protein resides in the secreted. Its function is as follows. Probable neurotoxin with unknown target. Possibly targets ion channels. This chain is Conotoxin Cal6.1c, found in Californiconus californicus (California cone).